The following is a 337-amino-acid chain: Putative 4-hydroxythreonine-4-phosphate dehydrogenase (337 aa).

3 residues coordinate a divalent metal cation: His-172, His-216, and His-271.

This sequence belongs to the PdxA family. Homodimer. Zn(2+) serves as cofactor. The cofactor is Mg(2+). It depends on Co(2+) as a cofactor.

The protein localises to the cytoplasm. The enzyme catalyses 4-(phosphooxy)-L-threonine + NAD(+) = 3-amino-2-oxopropyl phosphate + CO2 + NADH. It functions in the pathway cofactor biosynthesis; pyridoxine 5'-phosphate biosynthesis; pyridoxine 5'-phosphate from D-erythrose 4-phosphate: step 4/5. Catalyzes the NAD(P)-dependent oxidation of 4-(phosphooxy)-L-threonine (HTP) into 2-amino-3-oxo-4-(phosphooxy)butyric acid which spontaneously decarboxylates to form 3-amino-2-oxopropyl phosphate (AHAP). The protein is Putative 4-hydroxythreonine-4-phosphate dehydrogenase of Pasteurella multocida (strain Pm70).